Consider the following 755-residue polypeptide: Kelch-like protein 5 (755 aa).

Residues 152–184 (LDRPEVDDGTSEEENESDSSSCRTSNSSQTLSS) form a disordered region. The span at 158–168 (DDGTSEEENES) shows a compositional bias: acidic residues. Residues 169–184 (DSSSCRTSNSSQTLSS) show a composition bias toward low complexity. The BTB domain maps to 220-287 (CDVILVAGDR…AYTGRLELKE (68 aa)). Kelch repeat units follow at residues 468–514 (TLFA…VLDD), 515–561 (KLYV…VLEG), 563–608 (MYAV…VLSG), 609–655 (KLYA…TWNG), 657–708 (LYAI…LLGD), and 709–754 (KLYA…VTVK).

As to expression, expressed in adrenal gland, ovary and thyroid gland and less abundantly in lymph node, prostate, spinal cord, testis and trachea.

It is found in the cytoplasm. Its subcellular location is the cytoskeleton. This Homo sapiens (Human) protein is Kelch-like protein 5 (KLHL5).